Reading from the N-terminus, the 103-residue chain is O2 contryphan Vc1 (103 aa).

Positions 1-23 are cleaved as a signal peptide; that stretch reads MGKLTILFLVAAALLSTQVMVQG. The propeptide occupies 24–67; it reads DGAHERTEAEEPQHHGAKRQDGTGGYPVDDVDMMQRIFRTPLKR. A compositionally biased stretch (basic and acidic residues) spans 25-44; the sequence is GAHERTEAEEPQHHGAKRQD. The interval 25–50 is disordered; it reads GAHERTEAEEPQHHGAKRQDGTGGYP. Glutamine 68 carries the pyrrolidone carboxylic acid modification. Cysteine 70 and cysteine 83 form a disulfide bridge. Positions 99–103 are excised as a propeptide; the sequence is RRGRQ.

Belongs to the O2 superfamily. Post-translationally, pyrrolidone carboxylic acid at position 1 has no significant effect on the structure of contryphan-Vc1. As to expression, expressed by the venom gland.

It is found in the secreted. Functionally, unknown. Intracranial injection of the peptide into mice does not produce toxic effects. In addition, the peptide does not produce any observable changes to normal or depolarization-induced intracellular calcium levels in mouse dorsal root ganglion cells. This chain is O2 contryphan Vc1, found in Conus victoriae (Queen Victoria cone).